The following is a 300-amino-acid chain: UDP-N-acetylenolpyruvoylglucosamine reductase (300 aa).

The region spanning 30–194 is the FAD-binding PCMH-type domain; that stretch reads KVGGPADFFA…LAAVFSLAAG (165 aa). Residue Arg-174 is part of the active site. Ser-223 functions as the Proton donor in the catalytic mechanism. Glu-293 is an active-site residue.

It belongs to the MurB family. Requires FAD as cofactor.

The protein localises to the cytoplasm. It catalyses the reaction UDP-N-acetyl-alpha-D-muramate + NADP(+) = UDP-N-acetyl-3-O-(1-carboxyvinyl)-alpha-D-glucosamine + NADPH + H(+). Its pathway is cell wall biogenesis; peptidoglycan biosynthesis. Its function is as follows. Cell wall formation. The chain is UDP-N-acetylenolpyruvoylglucosamine reductase from Geotalea uraniireducens (strain Rf4) (Geobacter uraniireducens).